Here is a 316-residue protein sequence, read N- to C-terminus: Transaldolase A (316 aa).

The Schiff-base intermediate with substrate role is filled by lysine 131.

The protein belongs to the transaldolase family. Type 1 subfamily. As to quaternary structure, homodimer.

The protein localises to the cytoplasm. The enzyme catalyses D-sedoheptulose 7-phosphate + D-glyceraldehyde 3-phosphate = D-erythrose 4-phosphate + beta-D-fructose 6-phosphate. It participates in carbohydrate degradation; pentose phosphate pathway; D-glyceraldehyde 3-phosphate and beta-D-fructose 6-phosphate from D-ribose 5-phosphate and D-xylulose 5-phosphate (non-oxidative stage): step 2/3. In terms of biological role, transaldolase is important for the balance of metabolites in the pentose-phosphate pathway. The chain is Transaldolase A (talA) from Escherichia coli O157:H7.